The following is a 34-amino-acid chain: Colipase (34 aa).

2 cysteine pairs are disulfide-bonded: C12–C23 and C18–C34.

It belongs to the colipase family. In terms of assembly, forms a 1:1 stoichiometric complex with pancreatic lipase. As to expression, expressed by the pancreas.

It localises to the secreted. Colipase is a cofactor of pancreatic lipase. It allows the lipase to anchor itself to the lipid-water interface. Without colipase the enzyme is washed off by bile salts, which have an inhibitory effect on the lipase. The protein is Colipase (CLPS) of Gallus gallus (Chicken).